Consider the following 80-residue polypeptide: RNA-binding protein Hfq (80 aa).

In terms of domain architecture, Sm spans 10-70; sequence DLFLNTVRKQ…ISTIMPGQPM (61 aa).

This sequence belongs to the Hfq family. Homohexamer.

Functionally, RNA chaperone that binds small regulatory RNA (sRNAs) and mRNAs to facilitate mRNA translational regulation in response to envelope stress, environmental stress and changes in metabolite concentrations. Also binds with high specificity to tRNAs. The sequence is that of RNA-binding protein Hfq from Rhizobium etli (strain CIAT 652).